The sequence spans 300 residues: Porphobilinogen deaminase (300 aa).

Cys243 carries the S-(dipyrrolylmethanemethyl)cysteine modification.

It belongs to the HMBS family. As to quaternary structure, monomer. Dipyrromethane is required as a cofactor.

It catalyses the reaction 4 porphobilinogen + H2O = hydroxymethylbilane + 4 NH4(+). The protein operates within porphyrin-containing compound metabolism; protoporphyrin-IX biosynthesis; coproporphyrinogen-III from 5-aminolevulinate: step 2/4. Its function is as follows. Tetrapolymerization of the monopyrrole PBG into the hydroxymethylbilane pre-uroporphyrinogen in several discrete steps. This Clostridium novyi (strain NT) protein is Porphobilinogen deaminase.